The chain runs to 223 residues: Ethylene-inducing xylanase 1 (223 aa).

The signal sequence occupies residues 1–19 (MVSFTSLLAAFSVVSGVLT). Residues 34–223 (KRTPSSTGTS…SSGSATMTVS (190 aa)) enclose the GH11 domain. Glu-119 (nucleophile) is an active-site residue. The nuclear localization signal stretch occupies residues 174–184 (RRTKRTSGSVN). Glu-210 (proton donor) is an active-site residue.

It belongs to the glycosyl hydrolase 11 (cellulase G) family.

The protein localises to the secreted. It is found in the host nucleus. It catalyses the reaction Endohydrolysis of (1-&gt;4)-beta-D-xylosidic linkages in xylans.. It functions in the pathway glycan degradation; xylan degradation. Endo-1,4-beta-xylanase involved in the hydrolysis of xylan, a major structural heterogeneous polysaccharide found in plant biomass representing the second most abundant polysaccharide in the biosphere, after cellulose. Acts as an effector that localizes to the host nucleus to contribute to the virulence process. Induces host innate immunity responses; triggers BAK1-and SOBIR1-dependent cell death, salicylic acid signaling and jasmonic acid signaling. Does not exhibit any cell death when transiently expressed in N.benthamiana. The sequence is that of Ethylene-inducing xylanase 1 from Verticillium dahliae (strain VdLs.17 / ATCC MYA-4575 / FGSC 10137) (Verticillium wilt).